Here is a 296-residue protein sequence, read N- to C-terminus: UDP-N-acetylglucosamine transporter TMEM241 homolog (296 aa).

The next 10 membrane-spanning stretches (helical) occupy residues 7–29 (AVGL…VLSV), 41–61 (WQTL…WLEI), 67–87 (SDVV…YAGS), 93–113 (LPIP…YGFQ), 126–146 (IFSI…DPQF), 147–167 (DADG…YKVF), 187–207 (VFSV…ISAL), 217–237 (FHSG…ASVK), 248–266 (ASWN…LIYF), and 272–291 (VPLT…LVYA).

This sequence belongs to the nucleotide-sugar transporter family. SLC35A subfamily.

Its subcellular location is the golgi apparatus. It is found in the cis-Golgi network membrane. Its function is as follows. Golgi-localized UDP-N-acetylglucosamine (UDP-GlcNAc) transporter that transports UDP-N-acetylglucosamine into Golgi lumen. This Xenopus laevis (African clawed frog) protein is UDP-N-acetylglucosamine transporter TMEM241 homolog (tmem241).